Consider the following 160-residue polypeptide: Cytochrome b6-f complex subunit 4 (160 aa).

The next 3 membrane-spanning stretches (helical) occupy residues 36–56, 95–115, and 131–151; these read LLYI…GLAV, LLGV…PFLE, and TVFL…TLPI.

Belongs to the cytochrome b family. PetD subfamily. In terms of assembly, the 4 large subunits of the cytochrome b6-f complex are cytochrome b6, subunit IV (17 kDa polypeptide, petD), cytochrome f and the Rieske protein, while the 4 small subunits are petG, petL, petM and petN. The complex functions as a dimer.

It localises to the plastid. Its subcellular location is the chloroplast thylakoid membrane. Its function is as follows. Component of the cytochrome b6-f complex, which mediates electron transfer between photosystem II (PSII) and photosystem I (PSI), cyclic electron flow around PSI, and state transitions. The protein is Cytochrome b6-f complex subunit 4 of Arabidopsis thaliana (Mouse-ear cress).